Reading from the N-terminus, the 86-residue chain is Large ribosomal subunit protein uL23 (86 aa).

This sequence belongs to the universal ribosomal protein uL23 family. In terms of assembly, part of the 50S ribosomal subunit. Contacts protein L29.

Its function is as follows. Binds to 23S rRNA. One of the proteins that surrounds the polypeptide exit tunnel on the outside of the ribosome. This chain is Large ribosomal subunit protein uL23, found in Methanococcus maripaludis (strain C7 / ATCC BAA-1331).